We begin with the raw amino-acid sequence, 269 residues long: MAYSSSNSDIEDDSSKSNSNLSLSVGYFPCEDTPCEDTTSWEDAPSKGPSIHFLPPVQGAWGTERIGRRMKRQDQIQDEPEQFCKLSIFLAWDVDIGSDNTDSRANRLLNGDNLWIDKLPKERTKLSVGKLNNLVQEFQIFLENLKDDDAVFPETAQQDFQLSSGSPPEMVQMISQATASQRTSAPEISSILSEQPEKDDTPSHTQAQCCLNFGWAFSWLRQRILPSLLRRDHPVNATKSPHRSAPTKRLFHRGKRIQPQETLELGHPI.

The segment at 1 to 21 is disordered; it reads MAYSSSNSDIEDDSSKSNSNL.

This is an uncharacterized protein from Homo sapiens (Human).